The primary structure comprises 447 residues: Cobyrinate a,c-diamide synthase (447 aa).

In terms of domain architecture, GATase cobBQ-type spans 252–439 (KIAVAFDESF…AHQHCIGNPY (188 aa)). C331 acts as the Nucleophile in catalysis.

The protein belongs to the CobB/CbiA family. Mg(2+) serves as cofactor.

It carries out the reaction cob(II)yrinate + 2 L-glutamine + 2 ATP + 2 H2O = cob(II)yrinate a,c diamide + 2 L-glutamate + 2 ADP + 2 phosphate + 2 H(+). The enzyme catalyses Ni-sirohydrochlorin + 2 L-glutamine + 2 ATP + 2 H2O = Ni-sirohydrochlorin a,c-diamide + 2 L-glutamate + 2 ADP + 2 phosphate + 2 H(+). Its pathway is cofactor biosynthesis; adenosylcobalamin biosynthesis; cob(II)yrinate a,c-diamide from sirohydrochlorin (anaerobic route): step 10/10. Functionally, catalyzes the ATP-dependent amidation of the two carboxylate groups at positions a and c of cobyrinate, using either L-glutamine or ammonia as the nitrogen source. Involved in the biosynthesis of the unique nickel-containing tetrapyrrole coenzyme F430, the prosthetic group of methyl-coenzyme M reductase (MCR), which plays a key role in methanogenesis and anaerobic methane oxidation. Catalyzes the ATP-dependent amidation of the two carboxylate groups at positions a and c of Ni-sirohydrochlorin, using L-glutamine or ammonia as the nitrogen source. This Methanococcus maripaludis (strain C7 / ATCC BAA-1331) protein is Cobyrinate a,c-diamide synthase.